Here is a 555-residue protein sequence, read N- to C-terminus: MTHLSDLDIANQSTLQPIKDIAASVGISEDALEPYGHYKAKIDINKITPRENKGKVVLVTAMSPTPAGEGKSTVTVGLADAFHELNKNVMVALREPALGPTFGIKGGATGGGYAQVLPMEDINLHFNGDFHAITTANNALSAFIDNHIHQGNELGIDQRRIEWKRVLDMNDRALRHVNVGLGGPTNGVPREDGFNITVASEIMAILCLSRSIKDLKDKISRITIGYTRDRKPVTVADLKVEGALAMILKDAIKPNLVQSIEGTPALVHGGPFANIAHGCNSILATETARDLADIVVTEAGFGSDLGAEKFMDIKAREAGFDPAAVVVVATIRALKMHGGVAKDNLKEENVEAVKAGIVNLERHVNNIKKFGVEPVVAINAFIHDTDAEVEYVKSWAKENNVRIALTEVWEKGGKGGVDLANEVLEVIDQPNSFKPLYELELPLEQKIEKIVTEIYGGSKVTFSSKAQKQLKQFKENGWDNYPVCMAKTQYSFSDDQTLLGAPSGFEITIRELEAKTGAGFIVALTGAIMTMPGLPKKPAALNMDVTDDGHAIGLF.

65 to 72 (TPAGEGKS) contacts ATP.

This sequence belongs to the formate--tetrahydrofolate ligase family.

The enzyme catalyses (6S)-5,6,7,8-tetrahydrofolate + formate + ATP = (6R)-10-formyltetrahydrofolate + ADP + phosphate. It functions in the pathway one-carbon metabolism; tetrahydrofolate interconversion. This is Formate--tetrahydrofolate ligase from Staphylococcus aureus (strain NCTC 8325 / PS 47).